The chain runs to 66 residues: Small ribosomal subunit protein bS21 (66 aa).

Belongs to the bacterial ribosomal protein bS21 family.

In Rickettsia typhi (strain ATCC VR-144 / Wilmington), this protein is Small ribosomal subunit protein bS21.